Here is an 86-residue protein sequence, read N- to C-terminus: U18-theraphotoxin-Cg1a (86 aa).

An N-terminal signal peptide occupies residues 1–20 (KASVLITLAVLGVMFVWTSA). The propeptide occupies 21-49 (AELEERGSDQRDSPALIKSMAKVFQSEER). 3 cysteine pairs are disulfide-bonded: Cys51–Cys65, Cys58–Cys70, and Cys64–Cys78. Phe84 carries the post-translational modification Phenylalanine amide.

The protein belongs to the neurotoxin 10 (Hwtx-1) family. 47 subfamily. Expressed by the venom gland.

Its subcellular location is the secreted. Functionally, inhibits TTX-sensitive and TTX-insensitive sodium currents (IC(50) is 0.6 uM and 0.95 uM respectively) on rat dorsal root ganglion (DRG) neurons. Inhibits muscular subtypes sodium channels Nav1.4/SCN4A and Nav1.5/SCN5A transiently transfected in to HEK293 cells (IC(50) is 5.42 uM and 0.45 uM respectively). Also blocks Kv2.1/KCNB1 potassium channels expressed in X.laevis oocytes with an IC(50) of 604 nM. Injection of the toxin in mice was immediately followed by general ataxia, lack of response to stimuli and semiparalysis. This chain is U18-theraphotoxin-Cg1a, found in Chilobrachys guangxiensis (Chinese earth tiger tarantula).